The following is a 405-amino-acid chain: Serine/threonine transporter SstT (405 aa).

The next 8 membrane-spanning stretches (helical) occupy residues 13–33 (GGSLVLQIFVGIIAGVALAGF), 43–63 (FLGDLFVGALKAIAPVLVFVL), 82–102 (IILLYLVGTFAAALTAVLMSF), 141–161 (ALINANYIGLLAWGVGLGIAL), 185–205 (FVICLAPIGIFGLVAATIAQT), 217–237 (LGVLLGAMAVIAFVVNPLIVF), 298–318 (MAGAAITITVLTLAAVHTLGI), and 339–359 (ASGVAGGSLLLIPLACSLFGI).

The protein belongs to the dicarboxylate/amino acid:cation symporter (DAACS) (TC 2.A.23) family.

Its subcellular location is the cell inner membrane. The catalysed reaction is L-serine(in) + Na(+)(in) = L-serine(out) + Na(+)(out). The enzyme catalyses L-threonine(in) + Na(+)(in) = L-threonine(out) + Na(+)(out). Involved in the import of serine and threonine into the cell, with the concomitant import of sodium (symport system). In Shewanella amazonensis (strain ATCC BAA-1098 / SB2B), this protein is Serine/threonine transporter SstT.